Reading from the N-terminus, the 213-residue chain is Putative manganese efflux pump MntP (213 aa).

A run of 6 helical transmembrane segments spans residues 3 to 23 (ILSIVLTGFGLAMDAFAVSVA), 36 to 56 (ALKVALFFGGFQALMPLIGWG), 67 to 87 (AFDHWIAFILLGFIGGKMIFE), 130 to 150 (LAIATSIDALAVGVSFAFLGI), 152 to 172 (IVQTIIIIGIITFVLCFLGVI), and 187 to 207 (IVGGVILILIGINILLEHTGI).

It belongs to the MntP (TC 9.B.29) family.

Its subcellular location is the cell membrane. Probably functions as a manganese efflux pump. The sequence is that of Putative manganese efflux pump MntP from Clostridium perfringens (strain ATCC 13124 / DSM 756 / JCM 1290 / NCIMB 6125 / NCTC 8237 / Type A).